Consider the following 174-residue polypeptide: Cytochrome c-550-like protein (174 aa).

Residues M1–G37 form the signal peptide. Heme c-binding residues include C82, C85, H86, and C136.

The protein belongs to the cytochrome c family. PsbV subfamily. Requires heme c as cofactor.

Its subcellular location is the cellular thylakoid membrane. Possible low-potential cytochrome c. In Synechococcus sp. (strain JA-3-3Ab) (Cyanobacteria bacterium Yellowstone A-Prime), this protein is Cytochrome c-550-like protein (psbV2).